An 882-amino-acid chain; its full sequence is MRRMFGDCQVLSSMAAMAGAASSADALFASPLIPNPALAGFMSSSAAMPFHHFSNAAATLIPKEEGLMGGLHVAKDEGMDLEMDMELSGGSGSAHLDGLLSFADVDDDHKPQHSGHDQPPDAAQPSGAAGGNAKKKRYHRHTAHQIQQMEALFKECPHPDDKQRLKLSQELGLKPRQVKFWFQNRRTQMKAQQDRADNVILRAENENLKSDNFRLQAAIRNVVCPNCGHAAVLADMSYEEQQLRIENARLKDELDRLACIATRYGGGGGRQPVLSTSALSCISAPPPVLMPPLDLDMNVYSRHFAEQAPVMGCGDLIPPPVVPQHDGAAAYMGAMMAPVQEQDKQLVVDLAATAADQLARMCRAGEPLWVRQRGAEVMAVEEHARMFSWPVDGAKQGDGGAVARAEGTRDNAVVIMNSINLVDAFLDANKWMELFPSIVCKARTIQIINHGAASGHLGSGTLLLMQAEVQFLSPLVAAREVVFFRYCVHNADEGSWAIVDFPAEGFEEGLLQASVVRCRRRPSGCIIQDMPNGYSRVVWVEHMEMVGEEKPLQPVFRDYVASGAAFGATRWLSILQRQCERLASELARNIADLGVIRTPEARTNMMKLSQRMITTFCANISASGTQSWTALSDSTQDTIRVTTRKNTEPGQPSGVILTAVSTSWLPFTHQQVFELLADEQQRCQLEILSNGGSLHEVAHIANGSHPRNCISLLRINAASNSSQNVELLLQESSTHPDGGSLVVFATVDVDAIQVTMSGEDPSYIPLLPLGFAIFPATSPSPAAAPTISSSTTTTTGNGNGETSSTPPRNSSSNNNNADELLPPNGCLLTVGMQVLASAVPSAKLNLSSVTAINSHVCNAIHQITAALKSSAGGAGGEPASDQ.

The interval 104–144 (DVDDDHKPQHSGHDQPPDAAQPSGAAGGNAKKKRYHRHTAH) is disordered. The span at 107 to 119 (DDHKPQHSGHDQP) shows a compositional bias: basic and acidic residues. Residues 133–143 (AKKKRYHRHTA) show a composition bias toward basic residues. A DNA-binding region (homeobox) is located at residues 134-193 (KKKRYHRHTAHQIQQMEALFKECPHPDDKQRLKLSQELGLKPRQVKFWFQNRRTQMKAQQ). Positions 200–263 (ILRAENENLK…LDRLACIATR (64 aa)) form a coiled coil. Residues 340–584 (QEQDKQLVVD…LQRQCERLAS (245 aa)) form the START domain. Positions 782–816 (AAAPTISSSTTTTTGNGNGETSSTPPRNSSSNNNN) are enriched in low complexity. The interval 782-820 (AAAPTISSSTTTTTGNGNGETSSTPPRNSSSNNNNADEL) is disordered.

The protein belongs to the HD-ZIP homeobox family. Class IV subfamily.

It is found in the nucleus. Probable transcription factor. This is Homeobox-leucine zipper protein ROC3 (ROC3) from Oryza sativa subsp. japonica (Rice).